The chain runs to 115 residues: Large ribosomal subunit protein bL20c (115 aa).

Belongs to the bacterial ribosomal protein bL20 family.

Its subcellular location is the plastid. The protein localises to the chloroplast. Its function is as follows. Binds directly to 23S ribosomal RNA and is necessary for the in vitro assembly process of the 50S ribosomal subunit. It is not involved in the protein synthesizing functions of that subunit. In Chaetosphaeridium globosum (Charophycean green alga), this protein is Large ribosomal subunit protein bL20c.